We begin with the raw amino-acid sequence, 305 residues long: Acetaldehyde dehydrogenase (305 aa).

12–15 (SGNI) lines the NAD(+) pocket. Cysteine 127 serves as the catalytic Acyl-thioester intermediate. NAD(+) is bound by residues 158-166 (SAGPGTRAN) and asparagine 277.

This sequence belongs to the acetaldehyde dehydrogenase family.

It carries out the reaction acetaldehyde + NAD(+) + CoA = acetyl-CoA + NADH + H(+). This is Acetaldehyde dehydrogenase from Mycolicibacterium paratuberculosis (strain ATCC BAA-968 / K-10) (Mycobacterium paratuberculosis).